The sequence spans 456 residues: Histidine--tRNA ligase (456 aa).

This sequence belongs to the class-II aminoacyl-tRNA synthetase family. As to quaternary structure, homodimer.

It is found in the cytoplasm. The catalysed reaction is tRNA(His) + L-histidine + ATP = L-histidyl-tRNA(His) + AMP + diphosphate + H(+). This Borreliella burgdorferi (strain ATCC 35210 / DSM 4680 / CIP 102532 / B31) (Borrelia burgdorferi) protein is Histidine--tRNA ligase (hisS).